The following is a 249-amino-acid chain: UDP-2,3-diacylglucosamine hydrolase (249 aa).

Residues D7, H9, D40, N78, and H113 each contribute to the Mn(2+) site. 78–79 (NR) provides a ligand contact to substrate. D121, S159, T163, K166, and H194 together coordinate substrate. Mn(2+) contacts are provided by H194 and H196.

Belongs to the LpxH family. The cofactor is Mn(2+).

The protein resides in the cell inner membrane. The catalysed reaction is UDP-2-N,3-O-bis[(3R)-3-hydroxytetradecanoyl]-alpha-D-glucosamine + H2O = 2-N,3-O-bis[(3R)-3-hydroxytetradecanoyl]-alpha-D-glucosaminyl 1-phosphate + UMP + 2 H(+). It participates in glycolipid biosynthesis; lipid IV(A) biosynthesis; lipid IV(A) from (3R)-3-hydroxytetradecanoyl-[acyl-carrier-protein] and UDP-N-acetyl-alpha-D-glucosamine: step 4/6. Its function is as follows. Hydrolyzes the pyrophosphate bond of UDP-2,3-diacylglucosamine to yield 2,3-diacylglucosamine 1-phosphate (lipid X) and UMP by catalyzing the attack of water at the alpha-P atom. Involved in the biosynthesis of lipid A, a phosphorylated glycolipid that anchors the lipopolysaccharide to the outer membrane of the cell. The polypeptide is UDP-2,3-diacylglucosamine hydrolase (Pseudomonas fluorescens (strain SBW25)).